We begin with the raw amino-acid sequence, 118 residues long: UPF0102 protein RSal33209_1090 (118 aa).

The protein belongs to the UPF0102 family.

In Renibacterium salmoninarum (strain ATCC 33209 / DSM 20767 / JCM 11484 / NBRC 15589 / NCIMB 2235), this protein is UPF0102 protein RSal33209_1090.